A 132-amino-acid polypeptide reads, in one-letter code: Small ribosomal subunit protein uS8 (132 aa).

This sequence belongs to the universal ribosomal protein uS8 family. Part of the 30S ribosomal subunit. Contacts proteins S5 and S12.

Its function is as follows. One of the primary rRNA binding proteins, it binds directly to 16S rRNA central domain where it helps coordinate assembly of the platform of the 30S subunit. This chain is Small ribosomal subunit protein uS8, found in Borrelia duttonii (strain Ly).